A 510-amino-acid chain; its full sequence is Light-independent protochlorophyllide reductase subunit B (510 aa).

Aspartate 36 serves as a coordination point for [4Fe-4S] cluster. Aspartate 296 (proton donor) is an active-site residue. 431 to 432 (GM) is a binding site for substrate.

The protein belongs to the ChlB/BchB/BchZ family. Protochlorophyllide reductase is composed of three subunits; ChlL, ChlN and ChlB. Forms a heterotetramer of two ChlB and two ChlN subunits. It depends on [4Fe-4S] cluster as a cofactor.

It catalyses the reaction chlorophyllide a + oxidized 2[4Fe-4S]-[ferredoxin] + 2 ADP + 2 phosphate = protochlorophyllide a + reduced 2[4Fe-4S]-[ferredoxin] + 2 ATP + 2 H2O. Its pathway is porphyrin-containing compound metabolism; chlorophyll biosynthesis (light-independent). In terms of biological role, component of the dark-operative protochlorophyllide reductase (DPOR) that uses Mg-ATP and reduced ferredoxin to reduce ring D of protochlorophyllide (Pchlide) to form chlorophyllide a (Chlide). This reaction is light-independent. The NB-protein (ChlN-ChlB) is the catalytic component of the complex. In Synechococcus sp. (strain JA-3-3Ab) (Cyanobacteria bacterium Yellowstone A-Prime), this protein is Light-independent protochlorophyllide reductase subunit B.